The primary structure comprises 174 residues: Large ribosomal subunit protein uL10 (174 aa).

This sequence belongs to the universal ribosomal protein uL10 family. In terms of assembly, part of the ribosomal stalk of the 50S ribosomal subunit. The N-terminus interacts with L11 and the large rRNA to form the base of the stalk. The C-terminus forms an elongated spine to which L12 dimers bind in a sequential fashion forming a multimeric L10(L12)X complex.

Forms part of the ribosomal stalk, playing a central role in the interaction of the ribosome with GTP-bound translation factors. This Nitrosospira multiformis (strain ATCC 25196 / NCIMB 11849 / C 71) protein is Large ribosomal subunit protein uL10.